We begin with the raw amino-acid sequence, 190 residues long: Major sperm protein 32 (190 aa).

The region spanning 72 to 189 (MIQTQPGTKI…RRKNLPIEYN (118 aa)) is the MSP domain.

In terms of tissue distribution, sperm.

The protein localises to the cell projection. Its subcellular location is the pseudopodium. The protein resides in the cytoplasm. It is found in the cytoskeleton. Its function is as follows. Central component in molecular interactions underlying sperm crawling. Forms an extensive filament system that extends from sperm villipoda, along the leading edge of the pseudopod. This is Major sperm protein 32 (msp-32) from Caenorhabditis elegans.